A 365-amino-acid chain; its full sequence is 3,4-dihydroxy-2-butanone 4-phosphate synthase (365 aa).

A DHBP synthase region spans residues M1–I201. Residues R27–E28, D32, R140–T144, and E164 each bind D-ribulose 5-phosphate. Residue E28 coordinates Mg(2+). H143 is a binding site for Mg(2+). The GTP cyclohydrolase II-like stretch occupies residues H202–E365.

It in the N-terminal section; belongs to the DHBP synthase family. The protein in the C-terminal section; belongs to the GTP cyclohydrolase II family. Mg(2+) serves as cofactor. It depends on Mn(2+) as a cofactor.

It catalyses the reaction D-ribulose 5-phosphate = (2S)-2-hydroxy-3-oxobutyl phosphate + formate + H(+). It participates in cofactor biosynthesis; riboflavin biosynthesis; 2-hydroxy-3-oxobutyl phosphate from D-ribulose 5-phosphate: step 1/1. Its function is as follows. Catalyzes the conversion of D-ribulose 5-phosphate to formate and 3,4-dihydroxy-2-butanone 4-phosphate. This is 3,4-dihydroxy-2-butanone 4-phosphate synthase (ribB) from Pseudomonas aeruginosa (strain ATCC 15692 / DSM 22644 / CIP 104116 / JCM 14847 / LMG 12228 / 1C / PRS 101 / PAO1).